Reading from the N-terminus, the 211-residue chain is MRKYIKIGVAGPVGAGKTALIERLTREIACKYSVAVITNDIYTQEDAEFLTKNSLLPPERIMGVETGGCPHTAIREDASMNLEAVDEMVARFPEVELIFIESGGDNLSATFSPDLADVTIFVIDVAQGEKIPRKGGPGITRSDLLVINKTDLAPFVGADLSVMERDARRMRNGQPFIFTNLMKNENLDGVIGWIEKYALLKNIEDPASLVR.

11-18 (GPVGAGKT) is a GTP binding site.

The protein belongs to the SIMIBI class G3E GTPase family. UreG subfamily. In terms of assembly, homodimer. UreD, UreF and UreG form a complex that acts as a GTP-hydrolysis-dependent molecular chaperone, activating the urease apoprotein by helping to assemble the nickel containing metallocenter of UreC. The UreE protein probably delivers the nickel.

It is found in the cytoplasm. Facilitates the functional incorporation of the urease nickel metallocenter. This process requires GTP hydrolysis, probably effectuated by UreG. In Actinobacillus pleuropneumoniae serotype 3 (strain JL03), this protein is Urease accessory protein UreG.